The sequence spans 983 residues: Probable beta-galactosidase C (983 aa).

The signal sequence occupies residues 1–23 (MRIFSFLFLLLLGILTGQGLVSG). The substrate site is built by tyrosine 82, asparagine 127, alanine 128, glutamate 129, and asparagine 187. The Proton donor role is filled by glutamate 188. The N-linked (GlcNAc...) asparagine glycan is linked to asparagine 197. Tyrosine 251 serves as a coordination point for substrate. Cysteines 257 and 304 form a disulfide. A glycan (N-linked (GlcNAc...) asparagine) is linked at asparagine 276. Glutamate 287 serves as the catalytic Nucleophile. Tyrosine 353 contacts substrate. 9 N-linked (GlcNAc...) asparagine glycosylation sites follow: asparagine 391, asparagine 434, asparagine 466, asparagine 516, asparagine 601, asparagine 676, asparagine 714, asparagine 719, and asparagine 804.

Belongs to the glycosyl hydrolase 35 family.

The protein resides in the secreted. The enzyme catalyses Hydrolysis of terminal non-reducing beta-D-galactose residues in beta-D-galactosides.. Cleaves beta-linked terminal galactosyl residues from gangliosides, glycoproteins, and glycosaminoglycans. The sequence is that of Probable beta-galactosidase C (lacC) from Neosartorya fischeri (strain ATCC 1020 / DSM 3700 / CBS 544.65 / FGSC A1164 / JCM 1740 / NRRL 181 / WB 181) (Aspergillus fischerianus).